We begin with the raw amino-acid sequence, 620 residues long: 1-deoxy-D-xylulose-5-phosphate synthase (620 aa).

Thiamine diphosphate-binding positions include histidine 80 and 121–123; that span reads GHS. Aspartate 152 contacts Mg(2+). Residues 153–154, asparagine 181, tyrosine 288, and glutamate 370 each bind thiamine diphosphate; that span reads GA. Asparagine 181 is a binding site for Mg(2+).

This sequence belongs to the transketolase family. DXPS subfamily. In terms of assembly, homodimer. Mg(2+) serves as cofactor. Requires thiamine diphosphate as cofactor.

It catalyses the reaction D-glyceraldehyde 3-phosphate + pyruvate + H(+) = 1-deoxy-D-xylulose 5-phosphate + CO2. Its pathway is metabolic intermediate biosynthesis; 1-deoxy-D-xylulose 5-phosphate biosynthesis; 1-deoxy-D-xylulose 5-phosphate from D-glyceraldehyde 3-phosphate and pyruvate: step 1/1. Its function is as follows. Catalyzes the acyloin condensation reaction between C atoms 2 and 3 of pyruvate and glyceraldehyde 3-phosphate to yield 1-deoxy-D-xylulose-5-phosphate (DXP). This is 1-deoxy-D-xylulose-5-phosphate synthase from Escherichia coli (strain K12 / MC4100 / BW2952).